A 68-amino-acid chain; its full sequence is Large ribosomal subunit protein uL29 (68 aa).

Belongs to the universal ribosomal protein uL29 family.

The chain is Large ribosomal subunit protein uL29 (rpl29) from Pyrococcus horikoshii (strain ATCC 700860 / DSM 12428 / JCM 9974 / NBRC 100139 / OT-3).